A 554-amino-acid chain; its full sequence is Laccase-8 (554 aa).

The N-terminal stretch at 1 to 21 (MASAAMLVPLVLVLCTAAASA) is a signal peptide. Plastocyanin-like domains are found at residues 29–145 (KVGG…PRNG) and 156–309 (EEIP…YKGV). Cu cation is bound by residues His79 and His81. Asn107 and Asn113 each carry an N-linked (GlcNAc...) asparagine glycan. Positions 124 and 126 each coordinate Cu cation. 2 N-linked (GlcNAc...) asparagine glycosylation sites follow: Asn271 and Asn369. The 127-residue stretch at 411-537 (DFPDFPPPMQ…AMVFEVLNGP (127 aa)) folds into the Plastocyanin-like 3 domain. Residues His455, His458, His460, His516, Cys517, His518, and His522 each contribute to the Cu cation site.

It belongs to the multicopper oxidase family. Cu cation is required as a cofactor.

It is found in the secreted. The protein localises to the extracellular space. It localises to the apoplast. The enzyme catalyses 4 hydroquinone + O2 = 4 benzosemiquinone + 2 H2O. Lignin degradation and detoxification of lignin-derived products. In Oryza sativa subsp. japonica (Rice), this protein is Laccase-8 (LAC8).